A 59-amino-acid chain; its full sequence is MELLRAKRMAEAGEIVPVMYKGKQVVIQHVDDEREMARVYFTDEPEHEQDVPVRLLEEQ.

This sequence belongs to the SspH family.

Its subcellular location is the spore core. The protein is Small, acid-soluble spore protein H 2 of Geobacillus kaustophilus (strain HTA426).